A 397-amino-acid chain; its full sequence is MAVSAYTVPTTSHLGFNQKKQLFFCNKSAYKRVSFSSRPCVITCLAGDSQTIVIGLAADSGCGKSTFMRRLTSVFGGAAEPPRGGNPDSNTLISDTTTVICLDDYHSLDRTGRKEKGVTALDPRANDFDLMYEQVKALKEGKAVEKPIYNHVTGLLDAPELIKPPKILVIEGLHPMFDSRVRDLLDFSIYLDISNEVKFAWKIQRDMAERGHSLESIKASIEARKPDFDAYIDPQKQYADAVIEVLPTQLIPGDNEGKVLRVRLIQKEGVQYFSPVYLFDEGSSITWIPCGRKLTCSYPGIKFFYGPDTYFGNEVTVLEMDGQFDRLDELIYVESHLSNLSTKFYGEVTQQMLKHQDFPGSNNGTGLFQTIVGLKIRDLFEQLIASKTAAPAAATKA.

A chloroplast-targeting transit peptide spans 1-44 (MAVSAYTVPTTSHLGFNQKKQLFFCNKSAYKRVSFSSRPCVITC). Residues C62 and C101 are joined by a disulfide bond.

This sequence belongs to the phosphoribulokinase family.

Its subcellular location is the plastid. The protein localises to the chloroplast. The enzyme catalyses D-ribulose 5-phosphate + ATP = D-ribulose 1,5-bisphosphate + ADP + H(+). It participates in carbohydrate biosynthesis; Calvin cycle. With respect to regulation, light regulated via thioredoxin by reversible oxidation/reduction of sulfhydryl/disulfide groups. The polypeptide is Phosphoribulokinase, chloroplastic (Mesembryanthemum crystallinum (Common ice plant)).